The sequence spans 393 residues: Proteasome-activating nucleotidase (393 aa).

Positions 14 to 53 form a coiled coil; that stretch reads SDEVQLVRLLEEKIKSLQIEIENLRKELNYYKAEMEKMLS. Residues 178 to 183 and Y317 contribute to the ATP site; that span reads GTGKTM. Positions 391–393 are docks into pockets in the proteasome alpha-ring to cause gate opening; the sequence is KYS.

This sequence belongs to the AAA ATPase family. Homohexamer. The hexameric complex has a two-ring architecture resembling a top hat that caps the 20S proteasome core at one or both ends. Upon ATP-binding, the C-terminus of PAN interacts with the alpha-rings of the proteasome core by binding to the intersubunit pockets.

It is found in the cytoplasm. In terms of biological role, ATPase which is responsible for recognizing, binding, unfolding and translocation of substrate proteins into the archaeal 20S proteasome core particle. Is essential for opening the gate of the 20S proteasome via an interaction with its C-terminus, thereby allowing substrate entry and access to the site of proteolysis. Thus, the C-termini of the proteasomal ATPase function like a 'key in a lock' to induce gate opening and therefore regulate proteolysis. Unfolding activity requires energy from ATP hydrolysis, whereas ATP binding alone promotes ATPase-20S proteasome association which triggers gate opening, and supports translocation of unfolded substrates. The sequence is that of Proteasome-activating nucleotidase from Saccharolobus islandicus (strain Y.N.15.51 / Yellowstone #2) (Sulfolobus islandicus).